The primary structure comprises 161 residues: RNA pyrophosphohydrolase (161 aa).

Residues 12–154 form the Nudix hydrolase domain; the sequence is PYRPGVGMMI…KRKLYQAVVK (143 aa). The short motif at 46–67 is the Nudix box element; sequence GGIVPGETPSIAAMREMLEEIG.

Belongs to the Nudix hydrolase family. RppH subfamily. It depends on a divalent metal cation as a cofactor.

In terms of biological role, accelerates the degradation of transcripts by removing pyrophosphate from the 5'-end of triphosphorylated RNA, leading to a more labile monophosphorylated state that can stimulate subsequent ribonuclease cleavage. The chain is RNA pyrophosphohydrolase from Rickettsia africae (strain ESF-5).